Reading from the N-terminus, the 198-residue chain is Ribonuclease HII (198 aa).

One can recognise an RNase H type-2 domain in the interval 10 to 198 (HLVAGVDEVG…PVKRALGLVS (189 aa)). A divalent metal cation contacts are provided by D16, E17, and D108.

It belongs to the RNase HII family. Requires Mn(2+) as cofactor. Mg(2+) serves as cofactor.

The protein localises to the cytoplasm. The catalysed reaction is Endonucleolytic cleavage to 5'-phosphomonoester.. In terms of biological role, endonuclease that specifically degrades the RNA of RNA-DNA hybrids. The protein is Ribonuclease HII of Salmonella paratyphi A (strain AKU_12601).